The chain runs to 398 residues: uncharacterized protein (398 aa).

2 consecutive transmembrane segments (helical) span residues 31–51 (VVFSASLSLIIGLITGCCLLF) and 56–76 (AFITSGICLALLVSVISFFGC).

This sequence belongs to the chlamydial CPn_0129/CT_036/TC_0306 family.

The protein resides in the cell membrane. This is an uncharacterized protein from Chlamydia muridarum (strain MoPn / Nigg).